The following is a 267-amino-acid chain: Phosphatidylglycerol--prolipoprotein diacylglyceryl transferase (267 aa).

4 helical membrane passes run leucine 20–alanine 40, phenylalanine 57–serine 77, isoleucine 88–valine 108, and phenylalanine 117–isoleucine 137. Arginine 139 contributes to the a 1,2-diacyl-sn-glycero-3-phospho-(1'-sn-glycerol) binding site. Transmembrane regions (helical) follow at residues glutamine 175 to leucine 195, glycine 205 to leucine 225, and isoleucine 235 to leucine 255.

This sequence belongs to the Lgt family.

It localises to the cell membrane. It catalyses the reaction L-cysteinyl-[prolipoprotein] + a 1,2-diacyl-sn-glycero-3-phospho-(1'-sn-glycerol) = an S-1,2-diacyl-sn-glyceryl-L-cysteinyl-[prolipoprotein] + sn-glycerol 1-phosphate + H(+). It functions in the pathway protein modification; lipoprotein biosynthesis (diacylglyceryl transfer). In terms of biological role, catalyzes the transfer of the diacylglyceryl group from phosphatidylglycerol to the sulfhydryl group of the N-terminal cysteine of a prolipoprotein, the first step in the formation of mature lipoproteins. The sequence is that of Phosphatidylglycerol--prolipoprotein diacylglyceryl transferase from Streptococcus suis (strain 98HAH33).